A 245-amino-acid chain; its full sequence is tRNA pseudouridine synthase A (245 aa).

Asp-52 acts as the Nucleophile in catalysis. Tyr-111 contacts substrate.

Belongs to the tRNA pseudouridine synthase TruA family. As to quaternary structure, homodimer.

It catalyses the reaction uridine(38/39/40) in tRNA = pseudouridine(38/39/40) in tRNA. In terms of biological role, formation of pseudouridine at positions 38, 39 and 40 in the anticodon stem and loop of transfer RNAs. The chain is tRNA pseudouridine synthase A from Bradyrhizobium sp. (strain BTAi1 / ATCC BAA-1182).